The chain runs to 131 residues: 1,4-dihydroxy-2-naphthoyl-CoA hydrolase (131 aa).

The active site involves aspartate 7.

It belongs to the 4-hydroxybenzoyl-CoA thioesterase family. DHNA-CoA hydrolase subfamily.

It carries out the reaction 1,4-dihydroxy-2-naphthoyl-CoA + H2O = 1,4-dihydroxy-2-naphthoate + CoA + H(+). Its pathway is cofactor biosynthesis; phylloquinone biosynthesis. The protein operates within quinol/quinone metabolism; 1,4-dihydroxy-2-naphthoate biosynthesis; 1,4-dihydroxy-2-naphthoate from chorismate: step 7/7. Functionally, catalyzes the hydrolysis of 1,4-dihydroxy-2-naphthoyl-CoA (DHNA-CoA) to 1,4-dihydroxy-2-naphthoate (DHNA), a reaction involved in phylloquinone (vitamin K1) biosynthesis. The polypeptide is 1,4-dihydroxy-2-naphthoyl-CoA hydrolase (Synechococcus sp. (strain RCC307)).